The following is a 309-amino-acid chain: Flavonol sulfotransferase-like (309 aa).

59–64 lines the 3'-phosphoadenylyl sulfate pocket; it reads KTGTTW. His-119 acts as the Proton acceptor in catalysis. 3'-phosphoadenylyl sulfate-binding positions include Arg-141, Ser-149, Tyr-207, and 274–276; that span reads RKG.

It belongs to the sulfotransferase 1 family.

The protein resides in the cytoplasm. The sequence is that of Flavonol sulfotransferase-like from Flaveria bidentis (Coastal plain yellowtops).